A 300-amino-acid chain; its full sequence is Pantoate kinase (300 aa).

The protein belongs to the GHMP kinase family. PoK subfamily. As to quaternary structure, homodimer.

The enzyme catalyses (R)-pantoate + ATP = (R)-4-phosphopantoate + ADP + H(+). The protein operates within cofactor biosynthesis; coenzyme A biosynthesis. Moderately stimulated in the presence of potassium cations. Inhibited by increasing concentrations of pantoate. Activity is not affected by CoA/acetyl-CoA. Functionally, phosphorylates (R)-pantoate to form (R)-4-phosphopantoate in the CoA biosynthesis pathway. Displays broad nucleotide specificity and utilizes ATP, GTP, UTP, and CTP with comparable catalytic efficiencies. The sequence is that of Pantoate kinase from Thermococcus kodakarensis (strain ATCC BAA-918 / JCM 12380 / KOD1) (Pyrococcus kodakaraensis (strain KOD1)).